The sequence spans 336 residues: Phosphate acyltransferase (336 aa).

This sequence belongs to the PlsX family. In terms of assembly, homodimer. Probably interacts with PlsY.

It is found in the cytoplasm. It carries out the reaction a fatty acyl-[ACP] + phosphate = an acyl phosphate + holo-[ACP]. The protein operates within lipid metabolism; phospholipid metabolism. Its function is as follows. Catalyzes the reversible formation of acyl-phosphate (acyl-PO(4)) from acyl-[acyl-carrier-protein] (acyl-ACP). This enzyme utilizes acyl-ACP as fatty acyl donor, but not acyl-CoA. This Pseudomonas paraeruginosa (strain DSM 24068 / PA7) (Pseudomonas aeruginosa (strain PA7)) protein is Phosphate acyltransferase.